A 1411-amino-acid polypeptide reads, in one-letter code: DNA-directed RNA polymerase subunit beta' (1411 aa).

Cys-70, Cys-72, Cys-85, and Cys-88 together coordinate Zn(2+). Mg(2+) contacts are provided by Asp-460, Asp-462, and Asp-464. Positions 814, 888, 895, and 898 each coordinate Zn(2+).

Belongs to the RNA polymerase beta' chain family. In terms of assembly, the RNAP catalytic core consists of 2 alpha, 1 beta, 1 beta' and 1 omega subunit. When a sigma factor is associated with the core the holoenzyme is formed, which can initiate transcription. Requires Mg(2+) as cofactor. It depends on Zn(2+) as a cofactor.

The enzyme catalyses RNA(n) + a ribonucleoside 5'-triphosphate = RNA(n+1) + diphosphate. DNA-dependent RNA polymerase catalyzes the transcription of DNA into RNA using the four ribonucleoside triphosphates as substrates. This Idiomarina loihiensis (strain ATCC BAA-735 / DSM 15497 / L2-TR) protein is DNA-directed RNA polymerase subunit beta'.